Here is a 387-residue protein sequence, read N- to C-terminus: Postreplication repair E3 ubiquitin-protein ligase rad18 (387 aa).

The RING-type zinc finger occupies 29–67 (CLICHEYFRAPLITSCSHTFCSFCIRDYLREHPMCPACR). The segment at 119 to 153 (DSASGDEEWEDDLASNSSPASIAKKTSRDSKKRKR) is disordered. A compositionally biased stretch (acidic residues) spans 122–131 (SGDEEWEDDL). The segment at 156-183 (LVHCPACSNLVPHNQINQHLDSCLNSPS) adopts a UBZ4-type zinc-finger fold. Zn(2+)-binding residues include cysteine 159, cysteine 162, histidine 174, and cysteine 178. The tract at residues 174 to 206 (HLDSCLNSPSSPSSSSSPYKNKDNSKSNSLLSF) is disordered. Positions 177–192 (SCLNSPSSPSSSSSPY) are enriched in low complexity. Residues 240–274 (YALLSESKIRSKLSEMGLPTDGHKQLLQRRHAKWV) enclose the SAP domain. The segment at 335 to 387 (KQSTTNKNDSLRNTAVESSTEPSTSNGFPATSVSPPLTIDLTNSQTGSDGPQS) is disordered.

The protein belongs to the RAD18 family. Interacts with E2 ubc2, forming a complex with ubiquitin ligase activity.

It is found in the nucleus. It catalyses the reaction S-ubiquitinyl-[E2 ubiquitin-conjugating enzyme]-L-cysteine + [acceptor protein]-L-lysine = [E2 ubiquitin-conjugating enzyme]-L-cysteine + N(6)-ubiquitinyl-[acceptor protein]-L-lysine.. Its pathway is protein modification; protein ubiquitination. E3 RING-finger protein, member of the UBC2/RAD6 epistasis group. Associates to the E2 ubiquitin conjugating enzyme ubc2/rad6 to form the ubc2-rad18 ubiquitin ligase complex involved in postreplicative repair (PRR) of damaged DNA. This chain is Postreplication repair E3 ubiquitin-protein ligase rad18 (rhp18), found in Schizosaccharomyces pombe (strain 972 / ATCC 24843) (Fission yeast).